The chain runs to 575 residues: NEDD4-binding protein 2-like 2 (575 aa).

Composition is skewed to basic and acidic residues over residues 69–87, 129–142, and 149–167; these read QEDK…EMPG, PPEK…KSET, and DSKR…KLEM. 2 disordered regions span residues 69–169 and 555–575; these read QEDK…EMDT and GEQR…ADDY. The stretch at 162–194 forms a coiled coil; sequence SKKLEMDTELSQFYKEIEELENENEASQGSCTE. Residues 564 to 575 show a composition bias toward polar residues; it reads GSHSQVSIADDY.

The chain is NEDD4-binding protein 2-like 2 (N4bp2l2) from Mus musculus (Mouse).